We begin with the raw amino-acid sequence, 993 residues long: Protein translocase subunit SecA (993 aa).

ATP-binding positions include Q102, 120–124 (GEGKT), and D523. Residues 910–962 (ENAPEPQISGGNGQQPPQRRQQTSLDDLEKQFERKKKRELEQARMAGGGMPDA) are disordered. The segment covering 936–951 (DLEKQFERKKKRELEQ) has biased composition (basic and acidic residues). The Zn(2+) site is built by C979, C981, C990, and H991.

This sequence belongs to the SecA family. In terms of assembly, monomer and homodimer. Part of the essential Sec protein translocation apparatus which comprises SecA, SecYEG and auxiliary proteins SecDF. Other proteins may also be involved. Requires Zn(2+) as cofactor.

The protein resides in the cell inner membrane. It localises to the cytoplasm. It carries out the reaction ATP + H2O + cellular proteinSide 1 = ADP + phosphate + cellular proteinSide 2.. In terms of biological role, part of the Sec protein translocase complex. Interacts with the SecYEG preprotein conducting channel. Has a central role in coupling the hydrolysis of ATP to the transfer of proteins into and across the cell membrane, serving as an ATP-driven molecular motor driving the stepwise translocation of polypeptide chains across the membrane. In Koribacter versatilis (strain Ellin345), this protein is Protein translocase subunit SecA.